Here is a 126-residue protein sequence, read N- to C-terminus: Large ribosomal subunit protein uL22 (126 aa).

It belongs to the universal ribosomal protein uL22 family. As to quaternary structure, part of the 50S ribosomal subunit.

In terms of biological role, this protein binds specifically to 23S rRNA; its binding is stimulated by other ribosomal proteins, e.g. L4, L17, and L20. It is important during the early stages of 50S assembly. It makes multiple contacts with different domains of the 23S rRNA in the assembled 50S subunit and ribosome. Its function is as follows. The globular domain of the protein is located near the polypeptide exit tunnel on the outside of the subunit, while an extended beta-hairpin is found that lines the wall of the exit tunnel in the center of the 70S ribosome. The protein is Large ribosomal subunit protein uL22 of Zymomonas mobilis subsp. mobilis (strain ATCC 31821 / ZM4 / CP4).